We begin with the raw amino-acid sequence, 540 residues long: Putative actin-fragmin kinase DDB_G0287957 (540 aa).

Residues 27–68 (KNENLNIKNEILNNNNNNNNNKNNNNNNNNNNNIENNSKNEN) adopt a coiled-coil conformation. Disordered regions lie at residues 37–70 (ILNN…ENFN) and 317–341 (NNNN…INNC).

This sequence belongs to the protein kinase superfamily. AFK Ser/Thr protein kinase family.

This chain is Putative actin-fragmin kinase DDB_G0287957, found in Dictyostelium discoideum (Social amoeba).